A 435-amino-acid chain; its full sequence is Enolase (435 aa).

A (2R)-2-phosphoglycerate-binding site is contributed by glutamine 163. The Proton donor role is filled by glutamate 205. Aspartate 243, glutamate 292, and aspartate 319 together coordinate Mg(2+). 4 residues coordinate (2R)-2-phosphoglycerate: lysine 344, arginine 373, serine 374, and lysine 395. Lysine 344 (proton acceptor) is an active-site residue.

Belongs to the enolase family. Requires Mg(2+) as cofactor.

It is found in the cytoplasm. Its subcellular location is the secreted. The protein localises to the cell surface. The enzyme catalyses (2R)-2-phosphoglycerate = phosphoenolpyruvate + H2O. It participates in carbohydrate degradation; glycolysis; pyruvate from D-glyceraldehyde 3-phosphate: step 4/5. In terms of biological role, catalyzes the reversible conversion of 2-phosphoglycerate (2-PG) into phosphoenolpyruvate (PEP). It is essential for the degradation of carbohydrates via glycolysis. The chain is Enolase from Streptococcus agalactiae serotype Ia (strain ATCC 27591 / A909 / CDC SS700).